The primary structure comprises 1081 residues: Psi-producing oxygenase A (1081 aa).

A linoleate 8R-lipoxygenase region spans residues 105-446 (TKSFLNMLWN…DGAFNDDDLV (342 aa)). A heme b-binding site is contributed by H202. Y374 is a catalytic residue. Position 377 (H377) interacts with heme b. Residues 654 to 1081 (IFISSHAACM…GELPQLKEDF (428 aa)) are 9,12-octadecadienoate 8-hydroperoxide 8R-isomerase.

The protein belongs to the peroxidase family. Homotetramer. The cofactor is heme b.

The catalysed reaction is (9Z,12Z)-octadecadienoate + O2 = (8R,9Z,12Z)-8-hydroperoxyoctadeca-9,12-dienoate. It carries out the reaction (8R,9Z,12Z)-8-hydroperoxyoctadeca-9,12-dienoate = (5S,8R,9Z,12Z)-5,8-dihydroxyoctadeca-9,12-dienoate. Bifunctional heme-containing enzyme that oxidizes linoleic acid to (8R,9Z,12Z)-8-hydroperoxyoctadeca-9,12-dienoate (within the N-terminal heme peroxidase domain), which is subsequently isomerized to (5S,8R,9Z,12Z)-5,8-dihydroxyoctadeca-9,12-dienoate (within the C-terminal P450 heme thiolate domain). Oxidized unsaturated fatty acids, so-called oxylipins, derived from endogenous fatty acids, influence the development of the asexual conidiophores and sexual cleistothecia and regulate the secondary metabolism. These substances were collectively named psi factors and are primarily a mixture of hydroxylated oleic, linoleic and alpha-linolenic acids. They are termed psi-beta, psi-alpha, and psi-gamma, respectively. The sequence is that of Psi-producing oxygenase A (ppoA) from Emericella nidulans (Aspergillus nidulans).